The chain runs to 110 residues: Chagasin (110 aa).

The BC loop motif lies at 29 to 34; that stretch reads NPTTGF. A DE loop motif is present at residues 59-68; the sequence is PPDSKLLGAG. The FG loop signature appears at 91–100; it reads RPWTGPSHDS.

This sequence belongs to the protease inhibitor I42 family. Interacts with cruzipain.

The protein localises to the flagellar pocket. Its subcellular location is the cytoplasmic vesicle. It is found in the cell surface. Its function is as follows. Cysteine protease inhibitor. Inhibits cysteine protease cruzipain. This is Chagasin (cha) from Trypanosoma cruzi.